The sequence spans 1627 residues: Formin-like protein 5 (1627 aa).

The Phosphatase tensin-type domain occupies 5-194 (RKFFLKKTPD…HYITRQGSGP (190 aa)). Cys127 functions as the Phosphocysteine intermediate in the catalytic mechanism. In terms of domain architecture, C2 tensin-type spans 200-337 (SRPLILDSIV…FRAEVVFSDP (138 aa)). Disordered stretches follow at residues 370-413 (EAEE…LEKH), 680-787 (TKRE…YDSS), 801-1181 (KFNV…RGVV), 1241-1261 (AAVP…SLGS), and 1571-1627 (KQAE…KDVG). 4 stretches are compositionally biased toward basic and acidic residues: residues 402 to 413 (VSREDSGSLEKH), 681 to 691 (KREESGGRRDV), 700 to 717 (IEAR…RQIP), and 726 to 742 (MPVD…EKLG). 6 stretches are compositionally biased toward pro residues: residues 824–835 (APPPPPPPPPPY), 852–870 (QPPP…PPPA), 877–886 (IPPPPPPPPL), 897–908 (VPPPPPPPPPPR), 931–965 (ISPP…PPSA), and 974–1168 (APPP…PPGG). Residues 1188–1588 (FGAAAARKST…RAEKEAEAEK (401 aa)) enclose the FH2 domain. Basic and acidic residues-rich tracts occupy residues 1248–1261 (DSSK…SLGS) and 1571–1590 (KQAE…EKSK). Residues 1600–1611 (KPSNPSRQVKQT) show a composition bias toward polar residues. Basic and acidic residues predominate over residues 1612 to 1627 (PDTKTRAASRRGKDVG).

It belongs to the formin-like family. Class-II subfamily.

This Oryza sativa subsp. japonica (Rice) protein is Formin-like protein 5 (FH5).